The sequence spans 293 residues: Pantothenate synthetase (293 aa).

30–37 (MGNLHEGH) contacts ATP. Catalysis depends on H37, which acts as the Proton donor. Q61 contributes to the (R)-pantoate binding site. Residue Q61 coordinates beta-alanine. 149 to 152 (GEKD) is an ATP binding site. A (R)-pantoate-binding site is contributed by Q155. Residues V178 and 186 to 189 (MSSR) each bind ATP.

The protein belongs to the pantothenate synthetase family. Homodimer.

Its subcellular location is the cytoplasm. It catalyses the reaction (R)-pantoate + beta-alanine + ATP = (R)-pantothenate + AMP + diphosphate + H(+). It functions in the pathway cofactor biosynthesis; (R)-pantothenate biosynthesis; (R)-pantothenate from (R)-pantoate and beta-alanine: step 1/1. In terms of biological role, catalyzes the condensation of pantoate with beta-alanine in an ATP-dependent reaction via a pantoyl-adenylate intermediate. This chain is Pantothenate synthetase, found in Vibrio cholerae serotype O1 (strain ATCC 39541 / Classical Ogawa 395 / O395).